The primary structure comprises 161 residues: Tick receptor for ospA (161 aa).

In terms of assembly, interacts with ospA protein from B.burgdorferi. Post-translationally, glycosylated. Specifically expressed in gut. Localizes predominantly in the intercellular spaces and luminal surface of the gut. In the gut, it localizes along tight junctions. Not expressed in salivary gland or hemolymph.

It localises to the cell membrane. Serves as a receptor for ospA protein of B.burgdorferi, the Lyme disease agent. Required for spirochetal colonization. Essential for pathogen adherence to the vector. The sequence is that of Tick receptor for ospA (TROSPA) from Ixodes scapularis (Black-legged tick).